A 199-amino-acid chain; its full sequence is Small ribosomal subunit protein uS4 (199 aa).

The region spanning 91-154 (SRLDNLVYRM…RGLQLIKDAL (64 aa)) is the S4 RNA-binding domain.

This sequence belongs to the universal ribosomal protein uS4 family. As to quaternary structure, part of the 30S ribosomal subunit. Contacts protein S5. The interaction surface between S4 and S5 is involved in control of translational fidelity.

In terms of biological role, one of the primary rRNA binding proteins, it binds directly to 16S rRNA where it nucleates assembly of the body of the 30S subunit. Its function is as follows. With S5 and S12 plays an important role in translational accuracy. In Brevibacillus brevis (strain 47 / JCM 6285 / NBRC 100599), this protein is Small ribosomal subunit protein uS4.